Reading from the N-terminus, the 213-residue chain is ATP-dependent Clp protease proteolytic subunit (213 aa).

Ser-114 (nucleophile) is an active-site residue. Residue His-139 is part of the active site.

It belongs to the peptidase S14 family. Fourteen ClpP subunits assemble into 2 heptameric rings which stack back to back to give a disk-like structure with a central cavity, resembling the structure of eukaryotic proteasomes.

Its subcellular location is the cytoplasm. It carries out the reaction Hydrolysis of proteins to small peptides in the presence of ATP and magnesium. alpha-casein is the usual test substrate. In the absence of ATP, only oligopeptides shorter than five residues are hydrolyzed (such as succinyl-Leu-Tyr-|-NHMec, and Leu-Tyr-Leu-|-Tyr-Trp, in which cleavage of the -Tyr-|-Leu- and -Tyr-|-Trp bonds also occurs).. Functionally, cleaves peptides in various proteins in a process that requires ATP hydrolysis. Has a chymotrypsin-like activity. Plays a major role in the degradation of misfolded proteins. The polypeptide is ATP-dependent Clp protease proteolytic subunit (Pseudomonas putida (strain GB-1)).